A 400-amino-acid polypeptide reads, in one-letter code: Phosphoglycerate kinase (400 aa).

Residues 23-25 (DLN), arginine 38, 61-64 (HFGR), arginine 120, and arginine 153 each bind substrate. ATP-binding positions include lysine 203, glutamate 325, and 355–358 (GGDT).

The protein belongs to the phosphoglycerate kinase family. In terms of assembly, monomer.

The protein localises to the cytoplasm. It catalyses the reaction (2R)-3-phosphoglycerate + ATP = (2R)-3-phospho-glyceroyl phosphate + ADP. It functions in the pathway carbohydrate degradation; glycolysis; pyruvate from D-glyceraldehyde 3-phosphate: step 2/5. The protein is Phosphoglycerate kinase of Allorhizobium ampelinum (strain ATCC BAA-846 / DSM 112012 / S4) (Agrobacterium vitis (strain S4)).